A 302-amino-acid polypeptide reads, in one-letter code: uncharacterized protein (302 aa).

This sequence belongs to the HAD-like hydrolase superfamily.

This is an uncharacterized protein from Saccharomyces cerevisiae (strain ATCC 204508 / S288c) (Baker's yeast).